A 37-amino-acid chain; its full sequence is Large ribosomal subunit protein bL36c (37 aa).

It belongs to the bacterial ribosomal protein bL36 family.

Its subcellular location is the plastid. It is found in the chloroplast. The protein is Large ribosomal subunit protein bL36c (rpl36) of Cyanidium caldarium (Red alga).